Reading from the N-terminus, the 106-residue chain is Nucleoid-associated protein Exig_0019 (106 aa).

A compositionally biased stretch (low complexity) spans 1–16; sequence MRGMGNMNNMMKQMQK. Positions 1–23 are disordered; that stretch reads MRGMGNMNNMMKQMQKMQKDMAK.

The protein belongs to the YbaB/EbfC family. Homodimer.

It is found in the cytoplasm. It localises to the nucleoid. Its function is as follows. Binds to DNA and alters its conformation. May be involved in regulation of gene expression, nucleoid organization and DNA protection. This is Nucleoid-associated protein Exig_0019 from Exiguobacterium sibiricum (strain DSM 17290 / CCUG 55495 / CIP 109462 / JCM 13490 / 255-15).